Here is a 170-residue protein sequence, read N- to C-terminus: Cytochrome b6-f complex subunit 4 (170 aa).

The next 3 membrane-spanning stretches (helical) occupy residues 46–66, 105–125, and 141–161; these read LLFM…GLAV, LLGI…PFIE, and TVFL…TLPL.

The protein belongs to the cytochrome b family. PetD subfamily. The 4 large subunits of the cytochrome b6-f complex are cytochrome b6, subunit IV (17 kDa polypeptide, PetD), cytochrome f and the Rieske protein, while the 4 small subunits are PetG, PetL, PetM and PetN. The complex functions as a dimer.

Its subcellular location is the cellular thylakoid membrane. Its function is as follows. Component of the cytochrome b6-f complex, which mediates electron transfer between photosystem II (PSII) and photosystem I (PSI), cyclic electron flow around PSI, and state transitions. In Synechococcus sp. (strain JA-3-3Ab) (Cyanobacteria bacterium Yellowstone A-Prime), this protein is Cytochrome b6-f complex subunit 4.